Reading from the N-terminus, the 233-residue chain is Large ribosomal subunit protein uL1 (233 aa).

This sequence belongs to the universal ribosomal protein uL1 family. As to quaternary structure, part of the 50S ribosomal subunit.

Binds directly to 23S rRNA. The L1 stalk is quite mobile in the ribosome, and is involved in E site tRNA release. Its function is as follows. Protein L1 is also a translational repressor protein, it controls the translation of the L11 operon by binding to its mRNA. This is Large ribosomal subunit protein uL1 from Brucella canis (strain ATCC 23365 / NCTC 10854 / RM-666).